We begin with the raw amino-acid sequence, 402 residues long: Serine/threonine transporter SstT (402 aa).

8 consecutive transmembrane segments (helical) span residues 17–37 (IAIG…ITVI), 44–64 (FVGG…ANAL), 79–99 (IVLY…SHYI), 138–158 (ALSQ…GFAM), 179–199 (IVRW…FDTI), 212–232 (VLIL…NPII), 295–315 (MAGA…TLGI), and 336–356 (ASGI…LFGI).

The protein belongs to the dicarboxylate/amino acid:cation symporter (DAACS) (TC 2.A.23) family.

It localises to the cell membrane. The enzyme catalyses L-serine(in) + Na(+)(in) = L-serine(out) + Na(+)(out). The catalysed reaction is L-threonine(in) + Na(+)(in) = L-threonine(out) + Na(+)(out). Involved in the import of serine and threonine into the cell, with the concomitant import of sodium (symport system). This is Serine/threonine transporter SstT from Streptococcus thermophilus (strain ATCC BAA-491 / LMD-9).